The primary structure comprises 358 residues: Methylthioribose-1-phosphate isomerase (358 aa).

Substrate is bound by residues 54–56 and Gln-205; that span reads CGA. Asp-246 serves as the catalytic Proton donor. Position 256 to 257 (256 to 257) interacts with substrate; the sequence is NQ.

Belongs to the eIF-2B alpha/beta/delta subunits family. MtnA subfamily.

The catalysed reaction is 5-(methylsulfanyl)-alpha-D-ribose 1-phosphate = 5-(methylsulfanyl)-D-ribulose 1-phosphate. It participates in amino-acid biosynthesis; L-methionine biosynthesis via salvage pathway; L-methionine from S-methyl-5-thio-alpha-D-ribose 1-phosphate: step 1/6. Catalyzes the interconversion of methylthioribose-1-phosphate (MTR-1-P) into methylthioribulose-1-phosphate (MTRu-1-P). This Pseudomonas fluorescens (strain ATCC BAA-477 / NRRL B-23932 / Pf-5) protein is Methylthioribose-1-phosphate isomerase.